We begin with the raw amino-acid sequence, 1126 residues long: MNADAQSTDASLSMREPLSHASIQEMLRRVVEKQAADDTTAIGKVFSEAGRAYAQDALPSDKGEVLKISFSLDATQQNILRANFPGRRTVFSNSSSSSHCFAAAHRLLETDFVYRCFGNTVDSIIDLGGNFVSHMKVKRHNVHCCCPILDARDGARLTERILSLKSYVRKHPEIVGEADYCMDTFQKCSRRADYAFAIHSTSDLDVGELACSLDQKGVMKFICTMMVDADMLIHNEGEIPNFNVRWEIDRKKDLIHFDFIDEPNLGYSHRFSLLKHYLTYNAVDLGHAAYRIERKQDFGGVMVIDLTYSLGFVPKMPHSNGRSCAWYNRVKGQMVVHTVNEGYYHHSYQTAVRRKVLVDKKVLTRVTEVAFRQFRPNADAHSAIQSIATMLSSSTNHTIIGGVTLISGKPLSPDDYIPVATTIYYRVKKLYNAIPEMLSLLDKGERLSTDAVLKGSEGPMWYSGPTFLSALDKVNVPGDFVAKALLSLPKRDLKSLFSRSATSHSERTPVRDESPIRCTDGVFYPIRMLLKCLGSDKFESVTITDPRSNTETTVDLYQSFQKKIETVFSFILGKIDGPSPLISDPVYFQSLEDVYYAEWHQGNAIDASNYARTLLDDIRKQKEESLKAKAKEVEDAQKLNRAILQVHAYLEAHPDGGKIEGLGLSSQFIAKIPELAIPTPKPLPEFEKNAETGEILRINPHSDAILEAIDYLKSTSANSIITLNKLGDHCQWTTKGLDVVWAGDDKRRAFIPKKNTWVGPTARSYPLAKYERAMSKDGYVTLRWDGEVLDANCVRSLSQYEIVFVDQSCVFASAEAIIPSLEKALGLEAHFSVTIVDGVAGCGKTTNIKQIARSSGRDVDLILTSNRSSADELKETIDCSPLTKLHYIRTCDSYLMSASAVKAQRLIFDECFLQHAGLVYAAATLAGCSEVIGFGDTEQIPFVSRNPSFVFRHHKLTGKVERKLITWRSPADATYCLEKYFYKNKKPVKTNSRVLRSIEVVPINSPVSVERNTNALYLCHTQAEKAVLKAQTHLKGCDNIFTTHEAQGKTFDNVYFCRLTRTSTSLATGRDPINGPCNGLVALSRHKKTFKYFTIAHDSDDVIYNACRDAGNTDDSILARSYNHNF.

The tract at residues 69–406 (SFSLDATQQN…HTIIGGVTLI (338 aa)) is methyltransferase. One can recognise an Alphavirus-like MT domain in the interval 90–278 (VFSNSSSSSH…HRFSLLKHYL (189 aa)). The (+)RNA virus helicase ATP-binding domain occupies 806–963 (DQSCVFASAE…HKLTGKVERK (158 aa)). The segment at 834 to 1094 (TIVDGVAGCG…RHKKTFKYFT (261 aa)) is ATP-dependent helicase. 838–845 (GVAGCGKT) contacts ATP. The region spanning 964 to 1125 (LITWRSPADA…SILARSYNHN (162 aa)) is the (+)RNA virus helicase C-terminal domain.

Belongs to the bromoviridae replication protein 1a family. As to quaternary structure, interacts with RNA-directed RNA polymerase 2a.

The protein localises to the host endoplasmic reticulum membrane. In terms of biological role, involved in the virus replication. Contains a helicase domain and a methyltransferase domain. The methyltransferase domain is probably involved in viral RNA capping. Involved in the formation of ER membrane spherular invaginations in which RNA replication complexes form. This is Replication protein 1a from Alfalfa mosaic virus (AMV).